Reading from the N-terminus, the 534-residue chain is 5'-nucleotidase domain-containing protein 3 (534 aa).

The active-site Nucleophile is the aspartate 104. 2 residues coordinate Mg(2+): aspartate 104 and aspartate 106. Aspartate 106 functions as the Proton donor in the catalytic mechanism. Residue 234 to 242 (KEAIRDVHV) participates in substrate binding. A Mg(2+)-binding site is contributed by aspartate 372.

Belongs to the 5'(3')-deoxyribonucleotidase family. The cofactor is Mg(2+).

The chain is 5'-nucleotidase domain-containing protein 3 (nt5dc3) from Xenopus tropicalis (Western clawed frog).